The sequence spans 367 residues: MAHAELATEQTLLREIGRTERNRRHIRGWLAVVLFALFALVLVGGATRLTESGLSITEWKPVHGVIPPLSAQEWEEEFRLYQRIPQYEQINKGMTVDDFKTIFWWEWAHRLLARGIGVIFALPLFFFWVTGRVERRLRLPLLAILALGGLQGFIGWWMVSSGLAERTAVSQYRLATHLTIACVIFAACMWIYRGLCPHSDDAPPTKASQKMAAVIAIFSLFQIYLGAIVAGLDAGLSYNTWPLMDGAIVPGGLFVQQPAWINLFENPKTVQFVHRLGAYLLLALVLWHMIAALRSAPETTHARRSVLLFALVVVQAAIGITTLLLQVPIGWGVLHQGGALVVLGFAIAHWRGFVGAYPKDTAIEVRA.

The next 8 membrane-spanning stretches (helical) occupy residues isoleucine 26 to alanine 46, leucine 111 to glycine 131, leucine 139 to valine 159, leucine 174 to glycine 194, alanine 212 to leucine 232, phenylalanine 272 to alanine 292, serine 305 to leucine 325, and valine 327 to isoleucine 347. Histidine 274 serves as a coordination point for heme. Histidine 335 contributes to the heme binding site.

This sequence belongs to the COX15/CtaA family. Type 2 subfamily. In terms of assembly, interacts with CtaB. Heme b serves as cofactor.

The protein localises to the cell membrane. The catalysed reaction is Fe(II)-heme o + 2 A + H2O = Fe(II)-heme a + 2 AH2. It participates in porphyrin-containing compound metabolism; heme A biosynthesis; heme A from heme O: step 1/1. In terms of biological role, catalyzes the conversion of heme O to heme A by two successive hydroxylations of the methyl group at C8. The first hydroxylation forms heme I, the second hydroxylation results in an unstable dihydroxymethyl group, which spontaneously dehydrates, resulting in the formyl group of heme A. The polypeptide is Heme A synthase (Sinorhizobium medicae (strain WSM419) (Ensifer medicae)).